Here is a 194-residue protein sequence, read N- to C-terminus: Imidazoleglycerol-phosphate dehydratase (194 aa).

The protein belongs to the imidazoleglycerol-phosphate dehydratase family.

It localises to the cytoplasm. It catalyses the reaction D-erythro-1-(imidazol-4-yl)glycerol 3-phosphate = 3-(imidazol-4-yl)-2-oxopropyl phosphate + H2O. It functions in the pathway amino-acid biosynthesis; L-histidine biosynthesis; L-histidine from 5-phospho-alpha-D-ribose 1-diphosphate: step 6/9. The sequence is that of Imidazoleglycerol-phosphate dehydratase from Chlorobaculum tepidum (strain ATCC 49652 / DSM 12025 / NBRC 103806 / TLS) (Chlorobium tepidum).